We begin with the raw amino-acid sequence, 529 residues long: Cytochrome P450 monooxygenase fsoB (529 aa).

A helical transmembrane segment spans residues 4 to 24 (WLLSLLIAGVVFAIFQLRTVG). Cys-436 provides a ligand contact to heme.

This sequence belongs to the cytochrome P450 family. Heme serves as cofactor.

It localises to the membrane. Functionally, cytochrome P450 monooxygenase; part of the gene cluster that mediates the biosynthesis of the enfumafungin-type antibiotic fuscoatroside. Four enzymes are sufficient to produce fuscoatroside: the terpene cyclase-glycosyl transferase fusion protein fsoAthe cytochrome P450 monoxygenases fsoD and fsoE, and the acetyltransferase fsoF; the cytochrome P450 monooxygenase fsoB and the glucose oxidase-like protein fsoC do not seem to play a role in biosynthesis of fuscoatroside. This is Cytochrome P450 monooxygenase fsoB from Humicola fuscoatra.